The chain runs to 88 residues: Small ribosomal subunit protein bS20 (88 aa).

Belongs to the bacterial ribosomal protein bS20 family.

Functionally, binds directly to 16S ribosomal RNA. The polypeptide is Small ribosomal subunit protein bS20 (Bartonella henselae (strain ATCC 49882 / DSM 28221 / CCUG 30454 / Houston 1) (Rochalimaea henselae)).